Reading from the N-terminus, the 1621-residue chain is Lysophospholipase NTE1 (1621 aa).

The Cytoplasmic portion of the chain corresponds to 1–12 (MSSIPTPPDANG). Residues 13 to 33 (NPLIALAVAVIYAILYVLQGV) form a helical membrane-spanning segment. Residues 34 to 59 (KYGVSLLTIGIPSCIVRMLQYSLTIS) lie on the Lumenal side of the membrane. Residues 60–80 (LGFPHLLALFAGALLALFFLI) form a helical membrane-spanning segment. Over 81–1621 (RYRYLTRYAQ…RGNRLRRMSI (1541 aa)) the chain is Cytoplasmic. Disordered regions lie at residues 188–209 (PDAS…TRPS), 250–379 (EGEE…SVPR), 545–566 (QTAT…LDET), 648–667 (WNLN…QRDD), 711–735 (VSAL…GSTR), 772–791 (DDEA…GASG), and 839–870 (FRST…ERPF). 2 stretches are compositionally biased toward low complexity: residues 195-209 (TPTP…TRPS) and 348-361 (RRSQ…RLNS). A nucleoside 3',5'-cyclic phosphate is bound by residues 788–907 (GASG…GYLS) and 951–1070 (RLLS…IAGR). A compositionally biased stretch (polar residues) spans 839 to 867 (FRSTSSNQENPNSTPGSKHRQSSFGSSNE). The region spanning 1316–1480 (LVLGGGGARG…MDNTPIQPLR (165 aa)) is the PNPLA domain. Residues 1320–1325 (GGGARG) carry the GXGXXG motif. The GXSXG signature appears at 1347-1351 (GCSIG). Serine 1349 serves as the catalytic Nucleophile. Aspartate 1467 acts as the Proton acceptor in catalysis. A DGA/G motif is present at residues 1467 to 1469 (DGG).

The protein belongs to the NTE family.

The protein localises to the endoplasmic reticulum membrane. The catalysed reaction is a 1-acyl-sn-glycero-3-phosphocholine + H2O = sn-glycerol 3-phosphocholine + a fatty acid + H(+). Inhibited by organophosphorus esters. In terms of biological role, intracellular phospholipase B that catalyzes the double deacylation of phosphatidylcholine (PC) to glycerophosphocholine (GroPCho). Plays an important role in membrane lipid homeostasis. Responsible for the rapid PC turnover in response to inositol, elevated temperatures, or when choline is present in the growth medium. In Cryptococcus neoformans var. neoformans serotype D (strain B-3501A) (Filobasidiella neoformans), this protein is Lysophospholipase NTE1 (NTE1).